The following is a 205-amino-acid chain: Ribosomal RNA small subunit methyltransferase G (205 aa).

Residues Gly-76, Leu-81, 127–128 (IE), and Arg-140 each bind S-adenosyl-L-methionine.

The protein belongs to the methyltransferase superfamily. RNA methyltransferase RsmG family.

It localises to the cytoplasm. It catalyses the reaction guanosine(527) in 16S rRNA + S-adenosyl-L-methionine = N(7)-methylguanosine(527) in 16S rRNA + S-adenosyl-L-homocysteine. Specifically methylates the N7 position of guanine in position 527 of 16S rRNA. The sequence is that of Ribosomal RNA small subunit methyltransferase G from Francisella tularensis subsp. tularensis (strain WY96-3418).